Here is a 125-residue protein sequence, read N- to C-terminus: Large ribosomal subunit protein bL12 (125 aa).

The protein belongs to the bacterial ribosomal protein bL12 family. Homodimer. Part of the ribosomal stalk of the 50S ribosomal subunit. Forms a multimeric L10(L12)X complex, where L10 forms an elongated spine to which 2 to 4 L12 dimers bind in a sequential fashion. Binds GTP-bound translation factors.

In terms of biological role, forms part of the ribosomal stalk which helps the ribosome interact with GTP-bound translation factors. Is thus essential for accurate translation. In Syntrophomonas wolfei subsp. wolfei (strain DSM 2245B / Goettingen), this protein is Large ribosomal subunit protein bL12.